Consider the following 300-residue polypeptide: Bifunctional protein FolD (300 aa).

Residues 168 to 170 (GRS), serine 193, and isoleucine 234 contribute to the NADP(+) site.

It belongs to the tetrahydrofolate dehydrogenase/cyclohydrolase family. As to quaternary structure, homodimer.

It catalyses the reaction (6R)-5,10-methylene-5,6,7,8-tetrahydrofolate + NADP(+) = (6R)-5,10-methenyltetrahydrofolate + NADPH. The catalysed reaction is (6R)-5,10-methenyltetrahydrofolate + H2O = (6R)-10-formyltetrahydrofolate + H(+). It participates in one-carbon metabolism; tetrahydrofolate interconversion. Its function is as follows. Catalyzes the oxidation of 5,10-methylenetetrahydrofolate to 5,10-methenyltetrahydrofolate and then the hydrolysis of 5,10-methenyltetrahydrofolate to 10-formyltetrahydrofolate. This is Bifunctional protein FolD from Ehrlichia canis (strain Jake).